A 79-amino-acid polypeptide reads, in one-letter code: Acyl carrier protein (79 aa).

A Carrier domain is found at 2 to 77 (SDTAERVKKI…DAIDFINQKT (76 aa)). Residue S37 is modified to O-(pantetheine 4'-phosphoryl)serine.

The protein belongs to the acyl carrier protein (ACP) family. 4'-phosphopantetheine is transferred from CoA to a specific serine of apo-ACP by AcpS. This modification is essential for activity because fatty acids are bound in thioester linkage to the sulfhydryl of the prosthetic group.

The protein localises to the cytoplasm. It functions in the pathway lipid metabolism; fatty acid biosynthesis. Its function is as follows. Carrier of the growing fatty acid chain in fatty acid biosynthesis. This chain is Acyl carrier protein, found in Rhodospirillum centenum (strain ATCC 51521 / SW).